The chain runs to 86 residues: UPF0335 protein mll3968 (86 aa).

It belongs to the UPF0335 family.

The sequence is that of UPF0335 protein mll3968 from Mesorhizobium japonicum (strain LMG 29417 / CECT 9101 / MAFF 303099) (Mesorhizobium loti (strain MAFF 303099)).